A 316-amino-acid polypeptide reads, in one-letter code: Methionyl-tRNA formyltransferase (316 aa).

110–113 contacts (6S)-5,6,7,8-tetrahydrofolate; the sequence is SLLP.

The protein belongs to the Fmt family.

The enzyme catalyses L-methionyl-tRNA(fMet) + (6R)-10-formyltetrahydrofolate = N-formyl-L-methionyl-tRNA(fMet) + (6S)-5,6,7,8-tetrahydrofolate + H(+). Functionally, attaches a formyl group to the free amino group of methionyl-tRNA(fMet). The formyl group appears to play a dual role in the initiator identity of N-formylmethionyl-tRNA by promoting its recognition by IF2 and preventing the misappropriation of this tRNA by the elongation apparatus. The protein is Methionyl-tRNA formyltransferase of Bacillus licheniformis (strain ATCC 14580 / DSM 13 / JCM 2505 / CCUG 7422 / NBRC 12200 / NCIMB 9375 / NCTC 10341 / NRRL NRS-1264 / Gibson 46).